Reading from the N-terminus, the 331-residue chain is Biotin synthase (331 aa).

In terms of domain architecture, Radical SAM core spans 39-264 (SELQTCYLIS…VFPRSMVRLA (226 aa)). Positions 54, 58, and 61 each coordinate [4Fe-4S] cluster. [2Fe-2S] cluster contacts are provided by Cys98, Cys130, Cys190, and Arg262.

The protein belongs to the radical SAM superfamily. Biotin synthase family. Homodimer. The cofactor is [4Fe-4S] cluster. Requires [2Fe-2S] cluster as cofactor.

The enzyme catalyses (4R,5S)-dethiobiotin + (sulfur carrier)-SH + 2 reduced [2Fe-2S]-[ferredoxin] + 2 S-adenosyl-L-methionine = (sulfur carrier)-H + biotin + 2 5'-deoxyadenosine + 2 L-methionine + 2 oxidized [2Fe-2S]-[ferredoxin]. Its pathway is cofactor biosynthesis; biotin biosynthesis; biotin from 7,8-diaminononanoate: step 2/2. In terms of biological role, catalyzes the conversion of dethiobiotin (DTB) to biotin by the insertion of a sulfur atom into dethiobiotin via a radical-based mechanism. In Chlamydia pneumoniae (Chlamydophila pneumoniae), this protein is Biotin synthase.